Consider the following 419-residue polypeptide: Ubiquitin receptor RAD23c (419 aa).

Residues 1–79 (MKIFVKTLKG…IVIMMNKSKP (79 aa)) form the Ubiquitin-like domain. The segment covering 83–118 (AASSASAGTSQAKSIPPSTSQPSISPQTPASVSAPV) has biased composition (low complexity). The segment at 83 to 172 (AASSASAGTS…DSAPVGSQGD (90 aa)) is disordered. Over residues 119–135 (APAPTRPPPPAPTPTPA) the composition is skewed to pro residues. Residues 136-146 (PVAATETVTTP) show a composition bias toward low complexity. Positions 185–228 (SNLESTIQQILDMGGGTWDRETVVLALRAAFNNPERAVEYLYTG) constitute a UBA 1 domain. Residues 235–282 (VPPVARPPASAGQPANPPAQTQQPAAAPASGPNANPLDLFPQGLPNVG) form a disordered region. Residues 245 to 270 (AGQPANPPAQTQQPAAAPASGPNANP) are compositionally biased toward low complexity. Residues 288–331 (GTLDFLRNSQQFQALRAMVQANPQVLQPMLQELGKQNPNLMRLI) form the STI1 domain. Positions 372 to 413 (THEEREAIERLEAMGFERALVLEVFFACNKNEELAANYLLDH) constitute a UBA 2 domain.

It belongs to the RAD23 family. In terms of assembly, interacts with 'Lys-48'-linked polyubiquitin chains via its both UBA domains. Interacts with RPN10 via its ubiquitin-like domain. Widely expressed in the whole plant.

The protein localises to the nucleus. Its subcellular location is the cytoplasm. In terms of biological role, may be involved in nucleotide excision repair. Binds and presumably selects ubiquitin-conjugates for destruction. Prefers multiubiquitin chains rather than single ubiquitins, with a binding affinity for 'Lys-48'-linked ubiquitin chains. Acts as a ubiquitin receptor that associates with the 26S proteasomal docking subunit RPN10 for the indirect recognition of ubiquitinated substrates of ubiquitin/26S proteasome-mediated proteolysis (UPP). Involved in UV tolerance in hypocotyls, specifically in dark conditions. This chain is Ubiquitin receptor RAD23c, found in Arabidopsis thaliana (Mouse-ear cress).